The primary structure comprises 477 residues: Argininosuccinate lyase (477 aa).

It belongs to the lyase 1 family. Argininosuccinate lyase subfamily.

It is found in the cytoplasm. The enzyme catalyses 2-(N(omega)-L-arginino)succinate = fumarate + L-arginine. The protein operates within amino-acid biosynthesis; L-arginine biosynthesis; L-arginine from L-ornithine and carbamoyl phosphate: step 3/3. The sequence is that of Argininosuccinate lyase from Corynebacterium glutamicum (strain R).